Reading from the N-terminus, the 197-residue chain is RILP-like protein 2 (197 aa).

In terms of domain architecture, RH1 spans Glu14–Ala96. The stretch at Leu65 to Ser153 forms a coiled coil. An RH2 domain is found at Arg119–Ile184.

Homodimer. Interacts (via N-terminus) with MYO5A, the interaction is required for its role in dendrite formation. Interacts with RAC1. Interacts with RAB8A; interaction is dependent on the phosphorylation of RAB8A on 'Thr-72'. Interacts with RAB10 and RAB12; interaction is dependent on the phosphorylation of 'Thr-73' on RAB10 and 'Ser-105' on RAB12.

It is found in the cytoplasm. The protein localises to the cytosol. It localises to the cytoskeleton. The protein resides in the microtubule organizing center. Its subcellular location is the centrosome. It is found in the cell projection. The protein localises to the cilium. Functionally, involved in cell shape and neuronal morphogenesis, positively regulating the establishment and maintenance of dendritic spines. Plays a role in cellular protein transport, including protein transport away from primary cilia. May function via activation of RAC1 and PAK1. This Rattus norvegicus (Rat) protein is RILP-like protein 2 (Rilpl2).